A 106-amino-acid chain; its full sequence is Large ribosomal subunit protein bL21 (106 aa).

It belongs to the bacterial ribosomal protein bL21 family. Part of the 50S ribosomal subunit. Contacts protein L20.

In terms of biological role, this protein binds to 23S rRNA in the presence of protein L20. In Chlamydia abortus (strain DSM 27085 / S26/3) (Chlamydophila abortus), this protein is Large ribosomal subunit protein bL21.